We begin with the raw amino-acid sequence, 393 residues long: S-adenosylmethionine synthase 2 (393 aa).

E9 contacts Mg(2+). Residue H15 participates in ATP binding. Residue E43 coordinates K(+). L-methionine contacts are provided by E56 and Q99. ATP contacts are provided by residues 167-169, 235-238, D246, 252-253, A269, K273, and K277; these read DGK, SGRF, and RM. D246 contributes to the L-methionine binding site. K277 contacts L-methionine.

Belongs to the AdoMet synthase family. In terms of assembly, homotetramer. Mn(2+) is required as a cofactor. Mg(2+) serves as cofactor. The cofactor is Co(2+). It depends on K(+) as a cofactor.

The protein localises to the cytoplasm. The catalysed reaction is L-methionine + ATP + H2O = S-adenosyl-L-methionine + phosphate + diphosphate. It participates in amino-acid biosynthesis; S-adenosyl-L-methionine biosynthesis; S-adenosyl-L-methionine from L-methionine: step 1/1. Functionally, catalyzes the formation of S-adenosylmethionine from methionine and ATP. The reaction comprises two steps that are both catalyzed by the same enzyme: formation of S-adenosylmethionine (AdoMet) and triphosphate, and subsequent hydrolysis of the triphosphate. The chain is S-adenosylmethionine synthase 2 (SAMS2) from Daucus carota (Wild carrot).